The following is a 199-amino-acid chain: DnaJ homolog subfamily C member 5B (199 aa).

A phosphoserine mark is found at Ser14 and Ser16. In terms of domain architecture, J spans 19-84; it reads ALYEILGLHK…SKRNIYDKYG (66 aa).

In terms of assembly, interacts with the chaperone complex consisting of HSC70 and SGTA. Palmitoylated.

It localises to the membrane. This is DnaJ homolog subfamily C member 5B (DNAJC5B) from Bos taurus (Bovine).